Consider the following 136-residue polypeptide: Large ribosomal subunit protein eL27B (136 aa).

It belongs to the eukaryotic ribosomal protein eL27 family. As to quaternary structure, component of the large ribosomal subunit (LSU). Mature yeast ribosomes consist of a small (40S) and a large (60S) subunit. The 40S small subunit contains 1 molecule of ribosomal RNA (18S rRNA) and at least 33 different proteins. The large 60S subunit contains 3 rRNA molecules (25S, 5.8S and 5S rRNA) and at least 46 different proteins.

Its subcellular location is the cytoplasm. Functionally, component of the ribosome, a large ribonucleoprotein complex responsible for the synthesis of proteins in the cell. The small ribosomal subunit (SSU) binds messenger RNAs (mRNAs) and translates the encoded message by selecting cognate aminoacyl-transfer RNA (tRNA) molecules. The large subunit (LSU) contains the ribosomal catalytic site termed the peptidyl transferase center (PTC), which catalyzes the formation of peptide bonds, thereby polymerizing the amino acids delivered by tRNAs into a polypeptide chain. The nascent polypeptides leave the ribosome through a tunnel in the LSU and interact with protein factors that function in enzymatic processing, targeting, and the membrane insertion of nascent chains at the exit of the ribosomal tunnel. The sequence is that of Large ribosomal subunit protein eL27B (rpl2702) from Schizosaccharomyces pombe (strain 972 / ATCC 24843) (Fission yeast).